Here is a 378-residue protein sequence, read N- to C-terminus: MELKKLMEHISIIPDYRQTWKVEHKLSDILLLTICAVISGAEGWEDIEDFGETHLDFLKQYGDFENGIPVHDTIARVVSCISPAKFHECFINWMRDCHSSDDKDVIAIDGKTLRHSYDKSRRRGAIHVISAFSTMHSLVIGQIKTDEKSNEITAIPELLNMLDIKGKIITTDAMGCQKDIAEKIQKQGGDYLFAVKGTQGRLNKAFEEKFPLKELNNPEHDSYAISEKSHGREEIRLHIVCDVPDELIDFTFEWKGLKKLCVAVSFRSIIAEQKKEPEMTVRYYISSADLTAEKFATAIRNHWHVENKLHWRLDVVMNEDDCKIRRGNAAELFSGIRHIAINILTNDKVFKAGLRRKMRKAAMDRNYLASVLAGSGLS.

The protein belongs to the transposase 11 family.

This is H repeat-associated putative transposase YhhI (yhhI) from Escherichia coli (strain K12).